We begin with the raw amino-acid sequence, 806 residues long: Ent-atiserene synthase KSL4, chloroplastic (806 aa).

A chloroplast-targeting transit peptide spans 1 to 75; that stretch reads MGIVALILIK…AKLFKKNEVC (75 aa). The interval 33–56 is disordered; it reads ASLAGSGLPKTTPPKTASLQSHSP. Polar residues predominate over residues 45–55; sequence PPKTASLQSHS. 4 residues coordinate Mg(2+): D556, D560, N700, and E708. The DDXXD motif motif lies at 556-560; that stretch reads DDLFD.

It belongs to the terpene synthase family. The cofactor is Mg(2+). In terms of tissue distribution, highly expressed in leaves, and, at low levels, in roots, stems and flowers.

The protein localises to the plastid. The protein resides in the chloroplast. It catalyses the reaction ent-copalyl diphosphate = ent-atiserene + diphosphate. It functions in the pathway secondary metabolite biosynthesis; terpenoid biosynthesis. In terms of biological role, involved in the biosynthesis of ent-kaurene diterpenoids natural products such as oridonin, miltiradiene, eriocalyxin B and nezukol, known to exhibit antitumor, anti-inflammatory and antibacterial activities. Catalyzes the conversion of ent-copalyl diphosphate (ent-CPP) to ent-atiserene. This Isodon rubescens (Rabdosia rubescens) protein is Ent-atiserene synthase KSL4, chloroplastic.